The chain runs to 217 residues: Probable transaldolase (217 aa).

Lysine 83 serves as the catalytic Schiff-base intermediate with substrate.

Belongs to the transaldolase family. Type 3B subfamily.

It localises to the cytoplasm. The catalysed reaction is D-sedoheptulose 7-phosphate + D-glyceraldehyde 3-phosphate = D-erythrose 4-phosphate + beta-D-fructose 6-phosphate. The protein operates within carbohydrate degradation; pentose phosphate pathway; D-glyceraldehyde 3-phosphate and beta-D-fructose 6-phosphate from D-ribose 5-phosphate and D-xylulose 5-phosphate (non-oxidative stage): step 2/3. In terms of biological role, transaldolase is important for the balance of metabolites in the pentose-phosphate pathway. The chain is Probable transaldolase from Rhizorhabdus wittichii (strain DSM 6014 / CCUG 31198 / JCM 15750 / NBRC 105917 / EY 4224 / RW1) (Sphingomonas wittichii).